Consider the following 282-residue polypeptide: Shikimate dehydrogenase (NADP(+)) (282 aa).

Residues 15–17 (SKS) and T62 contribute to the shikimate site. The Proton acceptor role is filled by K66. Shikimate contacts are provided by N87 and D103. NADP(+)-binding positions include 127 to 131 (GAGGA), 151 to 156 (NRTHTK), and M220. Y222 contributes to the shikimate binding site. G244 provides a ligand contact to NADP(+).

The protein belongs to the shikimate dehydrogenase family. As to quaternary structure, homodimer.

The catalysed reaction is shikimate + NADP(+) = 3-dehydroshikimate + NADPH + H(+). Its pathway is metabolic intermediate biosynthesis; chorismate biosynthesis; chorismate from D-erythrose 4-phosphate and phosphoenolpyruvate: step 4/7. In terms of biological role, involved in the biosynthesis of the chorismate, which leads to the biosynthesis of aromatic amino acids. Catalyzes the reversible NADPH linked reduction of 3-dehydroshikimate (DHSA) to yield shikimate (SA). The protein is Shikimate dehydrogenase (NADP(+)) of Shewanella baltica (strain OS223).